We begin with the raw amino-acid sequence, 427 residues long: Dihydroorotase (427 aa).

Zn(2+)-binding residues include histidine 58 and histidine 60. Residues histidine 60–arginine 62 and asparagine 92 each bind substrate. Aspartate 150, histidine 177, and histidine 230 together coordinate Zn(2+). Asparagine 276 is a substrate binding site. Aspartate 303 provides a ligand contact to Zn(2+). The active site involves aspartate 303. Substrate is bound by residues histidine 307 and phenylalanine 321–glycine 322.

Belongs to the metallo-dependent hydrolases superfamily. DHOase family. Class I DHOase subfamily. It depends on Zn(2+) as a cofactor.

It carries out the reaction (S)-dihydroorotate + H2O = N-carbamoyl-L-aspartate + H(+). It functions in the pathway pyrimidine metabolism; UMP biosynthesis via de novo pathway; (S)-dihydroorotate from bicarbonate: step 3/3. In terms of biological role, catalyzes the reversible cyclization of carbamoyl aspartate to dihydroorotate. This chain is Dihydroorotase, found in Macrococcus caseolyticus (strain JCSC5402) (Macrococcoides caseolyticum).